Here is a 191-residue protein sequence, read N- to C-terminus: Putative glutathione-dependent formaldehyde-activating enzyme (191 aa).

One can recognise a CENP-V/GFA domain in the interval 20–166 (FAGGNLYCKC…FKAVGLETYD (147 aa)). 7 residues coordinate Zn(2+): cysteine 27, cysteine 29, cysteine 48, cysteine 50, cysteine 53, cysteine 95, and cysteine 98.

This sequence belongs to the Gfa family. It depends on Zn(2+) as a cofactor.

It catalyses the reaction S-(hydroxymethyl)glutathione = glutathione + formaldehyde. It functions in the pathway one-carbon metabolism; formaldehyde degradation; formate from formaldehyde (glutathione route): step 1/3. Its function is as follows. Catalyzes the condensation of formaldehyde and glutathione to S-hydroxymethylglutathione. This Aspergillus terreus (strain NIH 2624 / FGSC A1156) protein is Putative glutathione-dependent formaldehyde-activating enzyme.